Here is a 1163-residue protein sequence, read N- to C-terminus: Putative beta-glucuronidase (1163 aa).

The first 20 residues, 1–20 (MPRFLKYILGLFLISISAFG), serve as a signal peptide directing secretion.

This sequence belongs to the glycosyl hydrolase 2 family.

The protein localises to the periplasm. The catalysed reaction is a beta-D-glucuronoside + H2O = D-glucuronate + an alcohol. Glycoside hydrolase involved in ulvan degradation. Ulvan is the main polysaccharide component of the Ulvales (green seaweed) cell wall. It is composed of disaccharide building blocks comprising 3-sulfated rhamnose (Rha3S) linked to D-glucuronic acid (GlcA), L-iduronic acid (IduA), or D-xylose (Xyl). The chain is Putative beta-glucuronidase from Formosa agariphila (strain DSM 15362 / KCTC 12365 / LMG 23005 / KMM 3901 / M-2Alg 35-1).